The primary structure comprises 256 residues: PHD finger protein ALFIN-LIKE 4 (256 aa).

The segment at 149 to 195 is disordered; sequence QSKTANGSSKNKSGSKPPKRPNSDSKPQKQVQAKYEEENGGRGNGGD. The segment covering 154-164 has biased composition (low complexity); that stretch reads NGSSKNKSGSK. The segment at 200-252 adopts a PHD-type zinc-finger fold; the sequence is ETICGACGEAYANGEFWICCDICETWFHGKCVRITPAKAEHIKHYKCPGCSNK.

Belongs to the Alfin family. As to quaternary structure, interacts with H3K4me3 and to a lesser extent with H3K4me2.

Its subcellular location is the nucleus. Histone-binding component that specifically recognizes H3 tails trimethylated on 'Lys-4' (H3K4me3), which mark transcription start sites of virtually all active genes. This chain is PHD finger protein ALFIN-LIKE 4, found in Oryza sativa subsp. indica (Rice).